Consider the following 1146-residue polypeptide: Pol polyprotein (1146 aa).

The tract at residues 13 to 77 (SKKREARGSR…GSSRGSQPGQ (65 aa)) is disordered. The segment covering 29–41 (FPDTTEESAQQIC) has biased composition (polar residues). A compositionally biased stretch (basic and acidic residues) spans 45–59 (DSSDSKSVPRSERNK). Positions 66-76 (GEGSSRGSQPG) are enriched in polar residues. Residues 100–174 (LNVLLDTGAD…IPVTILGRDI (75 aa)) enclose the Peptidase A2 domain. Residue aspartate 105 is part of the active site. In terms of domain architecture, Reverse transcriptase spans 230 to 419 (EGKISEASDN…PPYSWLGYQL (190 aa)). The RNase H type-1 domain occupies 617 to 740 (PTSGITIYTD…ADEAAKIKEE (124 aa)). Residues 878 to 919 (ENIQEAQDEHENWHTSPKILARNYKIPLTVAKQITQECPHCT) form an Integrase-type zinc finger. Zn(2+) is bound by residues histidine 887, histidine 891, cysteine 915, and cysteine 918. The 158-residue stretch at 921–1078 (QGSGPAGCVM…TPWEVFITNQ (158 aa)) folds into the Integrase catalytic domain. Residues 1096–1144 (KFCFYKIPGEHDWKGPTRVLWKGDGAVVVNDEGKGIIAVPLTRTKLLIK) constitute a DNA-binding region (integrase-type).

It belongs to the retroviral Pol polyprotein family. In terms of processing, specific enzymatic cleavages in vivo yield mature proteins.

The catalysed reaction is Endohydrolysis of RNA in RNA/DNA hybrids. Three different cleavage modes: 1. sequence-specific internal cleavage of RNA. Human immunodeficiency virus type 1 and Moloney murine leukemia virus enzymes prefer to cleave the RNA strand one nucleotide away from the RNA-DNA junction. 2. RNA 5'-end directed cleavage 13-19 nucleotides from the RNA end. 3. DNA 3'-end directed cleavage 15-20 nucleotides away from the primer terminus.. The enzyme catalyses 3'-end directed exonucleolytic cleavage of viral RNA-DNA hybrid.. It carries out the reaction DNA(n) + a 2'-deoxyribonucleoside 5'-triphosphate = DNA(n+1) + diphosphate. Functionally, during replicative cycle of retroviruses, the reverse-transcribed viral DNA is integrated into the host chromosome by the viral integrase enzyme. RNase H activity is associated with the reverse transcriptase. The protein is Pol polyprotein (pol) of Equus asinus (Donkey).